Reading from the N-terminus, the 384-residue chain is S-adenosylmethionine synthase (384 aa).

His-15 is a binding site for ATP. Asp-17 contacts Mg(2+). Residue Glu-43 participates in K(+) binding. Residues Glu-56 and Gln-99 each coordinate L-methionine. Residues 99-109 (QSADINQGVDR) form a flexible loop region. ATP-binding positions include 164 to 166 (DAK), 230 to 231 (RF), Asp-239, 245 to 246 (RK), Ala-262, and Lys-266. An L-methionine-binding site is contributed by Asp-239. Lys-270 contacts L-methionine.

The protein belongs to the AdoMet synthase family. In terms of assembly, homotetramer; dimer of dimers. Requires Mg(2+) as cofactor. The cofactor is K(+).

The protein localises to the cytoplasm. It catalyses the reaction L-methionine + ATP + H2O = S-adenosyl-L-methionine + phosphate + diphosphate. The protein operates within amino-acid biosynthesis; S-adenosyl-L-methionine biosynthesis; S-adenosyl-L-methionine from L-methionine: step 1/1. Its function is as follows. Catalyzes the formation of S-adenosylmethionine (AdoMet) from methionine and ATP. The overall synthetic reaction is composed of two sequential steps, AdoMet formation and the subsequent tripolyphosphate hydrolysis which occurs prior to release of AdoMet from the enzyme. In Haemophilus influenzae (strain PittEE), this protein is S-adenosylmethionine synthase.